The sequence spans 169 residues: Ribosome maturation factor RimM (169 aa).

The region spanning 97–169 (EDEVYFKDLI…KIVVDWEYDY (73 aa)) is the PRC barrel domain.

It belongs to the RimM family. As to quaternary structure, binds ribosomal protein uS19.

It localises to the cytoplasm. In terms of biological role, an accessory protein needed during the final step in the assembly of 30S ribosomal subunit, possibly for assembly of the head region. Essential for efficient processing of 16S rRNA. May be needed both before and after RbfA during the maturation of 16S rRNA. It has affinity for free ribosomal 30S subunits but not for 70S ribosomes. The sequence is that of Ribosome maturation factor RimM from Francisella tularensis subsp. holarctica (strain FTNF002-00 / FTA).